Consider the following 186-residue polypeptide: Elongation factor P (186 aa).

It belongs to the elongation factor P family.

It is found in the cytoplasm. The protein operates within protein biosynthesis; polypeptide chain elongation. Its function is as follows. Involved in peptide bond synthesis. Stimulates efficient translation and peptide-bond synthesis on native or reconstituted 70S ribosomes in vitro. Probably functions indirectly by altering the affinity of the ribosome for aminoacyl-tRNA, thus increasing their reactivity as acceptors for peptidyl transferase. This Cupriavidus pinatubonensis (strain JMP 134 / LMG 1197) (Cupriavidus necator (strain JMP 134)) protein is Elongation factor P.